The chain runs to 657 residues: Tetracycline resistance protein TetQ (657 aa).

In terms of domain architecture, tr-type G spans 17–260 (MNIINLGILA…AISSFILPPE (244 aa)). GTP contacts are provided by residues 26-33 (AHIDAGKT), 90-94 (DTPGH), and 144-147 (NKID).

The protein belongs to the TRAFAC class translation factor GTPase superfamily. Classic translation factor GTPase family. TetM/TetO subfamily.

In terms of biological role, abolishes the inhibitory effect of tetracycline on protein synthesis by non-covalently modifying ribosomes. Confers mild resistance to tetracycline when expressed in E.coli. The polypeptide is Tetracycline resistance protein TetQ (tetQ) (Bacteroides fragilis).